Here is a 159-residue protein sequence, read N- to C-terminus: MSDEEHQFESKADAGASKTYPQQAGTIRKNGYIVIKGRPCKVVEVSTSKTGKHGHAKCHFVAIDIFTGKKLEDIVPSSHNCDVPHVNRTDYQLIDISEDGFVSLLTDNGNTKDDLRLPTDENLLSLIKDGFAEGKDLVVSVMSAMGEEQINALKDIGPK.

Positions Met-1–Ala-12 are enriched in basic and acidic residues. The segment at Met-1–Pro-21 is disordered. Lys-52 bears the Hypusine mark.

This sequence belongs to the eIF-5A family. In terms of processing, lys-52 undergoes hypusination, a unique post-translational modification that consists in the addition of a butylamino group from spermidine to lysine side chain, leading to the formation of the unusual amino acid hypusine. eIF-5As are the only known proteins to undergo this modification, which is essential for their function.

In terms of biological role, translation factor that promotes translation elongation and termination, particularly upon ribosome stalling at specific amino acid sequence contexts. Binds between the exit (E) and peptidyl (P) site of the ribosome and promotes rescue of stalled ribosome: specifically required for efficient translation of polyproline-containing peptides as well as other motifs that stall the ribosome. Acts as a ribosome quality control (RQC) cofactor by joining the RQC complex to facilitate peptidyl transfer during CAT tailing step. This Solanum lycopersicum (Tomato) protein is Eukaryotic translation initiation factor 5A-3.